A 505-amino-acid chain; its full sequence is MAESQSQGADQAQDLNNELKTRREKLVALRETGIAFPNDFRRDSTSDRLHAEFDGKENEELEELGVEVTVAGRMMTRRIMGKASFVTLQDVGGRIQLYVSRDDLAEGIYNEQFKKWDLGDILGARGKLFKTKTGELSIHCTELRLLTKALRPLPDKFHGLADQETRYRQRYLDLIANDESRNTFRIRSKVMAAIRSFMVDHGFMEVETPMMQVIPGGASARPFITHHNALDIDMYLRIAPELYLKRLVVGGFERVFEINRNFRNEGVSPRHNPEFTMMELYMAYADYKDLIVLTENLFRTLTQDVLGSTTVEYGDQTFDFGKPFEKLTMREAICKYRPETNVADLDDLEKATAIAQSLGIKIEKSWGLGRIVTEIFEETAESSLIQPTFITEYPAEVSPLARRNDQNPEITDRFEFFIGGREIGNGFSELNDAEDQAERFAQQVNAKDAGDDEAMFYDEDYVTALEHGLPPTAGLGIGIDRMVMLFTNSHTIRDVILFPAMRPQK.

Positions 415 and 422 each coordinate Mg(2+).

The protein belongs to the class-II aminoacyl-tRNA synthetase family. In terms of assembly, homodimer. It depends on Mg(2+) as a cofactor.

It is found in the cytoplasm. The catalysed reaction is tRNA(Lys) + L-lysine + ATP = L-lysyl-tRNA(Lys) + AMP + diphosphate. In Pectobacterium carotovorum subsp. carotovorum (strain PC1), this protein is Lysine--tRNA ligase.